A 317-amino-acid chain; its full sequence is Transcription factor EC (317 aa).

The disordered stretch occupies residues 1-44 (MTLDHQILNQSFKRSHPPTPSSELLVQHGHPSPESDTGLTGNPL). Residues 1-90 (MTLDHQILNQ…GLTSASCPSS (90 aa)) form a necessary for transcriptional transactivation region. The span at 34 to 43 (ESDTGLTGNP) shows a compositional bias: polar residues. Positions 110–163 (QKKDNHNLIERRRRYNINYRIKELGTLIPKSNDPDMRWNKGTILKASVEYIKWL) constitute a bHLH domain. The interval 241-317 (TSPELCDQAM…SFSSEDGDEL (77 aa)) is necessary for transcriptional transactivation. Positions 297–317 (PAVSKESSRRSSFSSEDGDEL) are disordered.

This sequence belongs to the MiT/TFE family. As to quaternary structure, homodimer. Forms heterodimers with MITF and TFE3. Interacts with MITF.

It is found in the nucleus. In terms of biological role, transcriptional regulator that acts as a repressor or an activator. Acts as a transcriptional repressor on minimal promoter containing element F (that includes an E-box sequence). Binds to element F in an E-box sequence-specific manner. Acts as a transcriptional transactivator on the proximal promoter region of the tartrate-resistant acid phosphatase (TRAP) E-box containing promoter. Collaborates with MITF in target gene activation. Acts as a transcriptional repressor on minimal promoter containing mu E3 enhancer sequence. Binds to mu E3 DNA sequence of the immunoglobulin heavy-chain gene enhancer. Binds DNA in a homo- or heterodimeric form. The protein is Transcription factor EC (TFEC) of Bos taurus (Bovine).